The following is a 302-amino-acid chain: Digeranylgeranylglyceryl phosphate synthase (302 aa).

8 helical membrane passes run 21–41 (LVVA…IYGG), 43–63 (IVSS…AGGY), 103–123 (IGLI…FAVL), 144–164 (IVIA…ASCM), 167–187 (GKVV…LLVL), 218–238 (AYMA…FPYI), 244–264 (MAYL…LAIL), and 282–302 (ARSA…AGLM).

This sequence belongs to the UbiA prenyltransferase family. DGGGP synthase subfamily. Mg(2+) is required as a cofactor.

The protein localises to the cell membrane. It catalyses the reaction sn-3-O-(geranylgeranyl)glycerol 1-phosphate + (2E,6E,10E)-geranylgeranyl diphosphate = 2,3-bis-O-(geranylgeranyl)-sn-glycerol 1-phosphate + diphosphate. Its pathway is membrane lipid metabolism; glycerophospholipid metabolism. In terms of biological role, prenyltransferase that catalyzes the transfer of the geranylgeranyl moiety of geranylgeranyl diphosphate (GGPP) to the C2 hydroxyl of (S)-3-O-geranylgeranylglyceryl phosphate (GGGP). This reaction is the second ether-bond-formation step in the biosynthesis of archaeal membrane lipids. This Hyperthermus butylicus (strain DSM 5456 / JCM 9403 / PLM1-5) protein is Digeranylgeranylglyceryl phosphate synthase.